The sequence spans 356 residues: Phosphoribosyl pyrophosphate synthase-associated protein 1 (356 aa).

M1 is subject to N-acetylmethionine. 2 positions are modified to phosphoserine: S177 and S215.

This sequence belongs to the ribose-phosphate pyrophosphokinase family. Binds to PRPS1 and PRPS2.

In terms of biological role, seems to play a negative regulatory role in 5-phosphoribose 1-diphosphate synthesis. The protein is Phosphoribosyl pyrophosphate synthase-associated protein 1 (Prpsap1) of Mus musculus (Mouse).